The chain runs to 670 residues: DNA ligase (670 aa).

NAD(+) contacts are provided by residues 33–37 (DAEYD), 82–83 (SL), and glutamate 114. Residue lysine 116 is the N6-AMP-lysine intermediate of the active site. NAD(+) contacts are provided by arginine 137, glutamate 174, lysine 291, and lysine 315. Cysteine 409, cysteine 412, cysteine 427, and cysteine 433 together coordinate Zn(2+). The 78-residue stretch at 593–670 (GVELPLEGKT…TEQDLLNLMK (78 aa)) folds into the BRCT domain.

This sequence belongs to the NAD-dependent DNA ligase family. LigA subfamily. Mg(2+) is required as a cofactor. The cofactor is Mn(2+).

The catalysed reaction is NAD(+) + (deoxyribonucleotide)n-3'-hydroxyl + 5'-phospho-(deoxyribonucleotide)m = (deoxyribonucleotide)n+m + AMP + beta-nicotinamide D-nucleotide.. Its function is as follows. DNA ligase that catalyzes the formation of phosphodiester linkages between 5'-phosphoryl and 3'-hydroxyl groups in double-stranded DNA using NAD as a coenzyme and as the energy source for the reaction. It is essential for DNA replication and repair of damaged DNA. This chain is DNA ligase, found in Vibrio campbellii (strain ATCC BAA-1116).